The primary structure comprises 106 residues: Small ribosomal subunit protein uS10 (106 aa).

Belongs to the universal ribosomal protein uS10 family. Part of the 30S ribosomal subunit.

Involved in the binding of tRNA to the ribosomes. The sequence is that of Small ribosomal subunit protein uS10 from Mycoplasma genitalium (strain ATCC 33530 / DSM 19775 / NCTC 10195 / G37) (Mycoplasmoides genitalium).